A 42-amino-acid polypeptide reads, in one-letter code: Beta-defensin 13 (42 aa).

3 cysteine pairs are disulfide-bonded: Cys9/Cys38, Cys16/Cys31, and Cys21/Cys39.

The protein belongs to the beta-defensin family. As to expression, neutrophilic granules.

It localises to the secreted. Functionally, has bactericidal activity. Active against E.coli ML35 and S.aureus 502A. This is Beta-defensin 13 (DEFB13) from Bos taurus (Bovine).